Reading from the N-terminus, the 678-residue chain is Probable 3',5'-cyclic phosphodiesterase pde-3 (678 aa).

3 disordered regions span residues 1–27 (MSPG…FQPT), 52–95 (AEMR…VLGG), and 223–250 (TVPA…NEHE). Positions 7-19 (AVGGVSPPVMVPG) are enriched in low complexity. Composition is skewed to polar residues over residues 60–85 (TATS…NSGV) and 231–246 (ARSS…PSNN). A PDEase domain is found at 281 to 632 (RYDTRELDTD…RKWKEQIELE (352 aa)). His356 serves as the catalytic Proton donor. The a divalent metal cation site is built by His360, His421, Asp422, and Asp531. Positions 654-678 (EEESASTSDSPDPRRDSPLDSDLSQ) are disordered.

Belongs to the cyclic nucleotide phosphodiesterase family. The cofactor is a divalent metal cation.

It catalyses the reaction a nucleoside 3',5'-cyclic phosphate + H2O = a nucleoside 5'-phosphate + H(+). This Caenorhabditis elegans protein is Probable 3',5'-cyclic phosphodiesterase pde-3 (pde-3).